The chain runs to 195 residues: ATP-dependent Clp protease proteolytic subunit (195 aa).

The Nucleophile role is filled by serine 99. The active site involves histidine 124.

It belongs to the peptidase S14 family. Fourteen ClpP subunits assemble into 2 heptameric rings which stack back to back to give a disk-like structure with a central cavity, resembling the structure of eukaryotic proteasomes.

Its subcellular location is the cytoplasm. The catalysed reaction is Hydrolysis of proteins to small peptides in the presence of ATP and magnesium. alpha-casein is the usual test substrate. In the absence of ATP, only oligopeptides shorter than five residues are hydrolyzed (such as succinyl-Leu-Tyr-|-NHMec, and Leu-Tyr-Leu-|-Tyr-Trp, in which cleavage of the -Tyr-|-Leu- and -Tyr-|-Trp bonds also occurs).. In terms of biological role, cleaves peptides in various proteins in a process that requires ATP hydrolysis. Has a chymotrypsin-like activity. Plays a major role in the degradation of misfolded proteins. This chain is ATP-dependent Clp protease proteolytic subunit, found in Coxiella burnetii (strain RSA 331 / Henzerling II).